The primary structure comprises 701 residues: Epithelial splicing regulatory protein 2 (701 aa).

RRM domains lie at 226–303, 327–407, and 448–523; these read TVIR…KATG, VIIR…RSTA, and CVRL…VEVF.

This sequence belongs to the ESRP family.

It localises to the nucleus. Functionally, mRNA splicing factor that regulates the formation of epithelial cell-specific isoforms. Specifically regulates the expression of FGFR2-IIIb, an epithelial cell-specific isoform of FGFR2. Acts by directly binding specific sequences in mRNAs. Binds the GU-rich sequence motifs in the ISE/ISS-3, a cis-element regulatory region present in the mRNA of FGFR2. This is Epithelial splicing regulatory protein 2 (ESRP2) from Gallus gallus (Chicken).